Consider the following 100-residue polypeptide: Large ribosomal subunit protein uL23 (100 aa).

Belongs to the universal ribosomal protein uL23 family. In terms of assembly, part of the 50S ribosomal subunit. Contacts protein L29, and trigger factor when it is bound to the ribosome.

Functionally, one of the early assembly proteins it binds 23S rRNA. One of the proteins that surrounds the polypeptide exit tunnel on the outside of the ribosome. Forms the main docking site for trigger factor binding to the ribosome. In Buchnera aphidicola subsp. Baizongia pistaciae (strain Bp), this protein is Large ribosomal subunit protein uL23.